Reading from the N-terminus, the 245-residue chain is rRNA adenine N-6-methyltransferase (245 aa).

S-adenosyl-L-methionine is bound by residues Asn-10, Leu-12, Gly-37, Glu-58, Asp-83, and Ser-100.

The protein belongs to the class I-like SAM-binding methyltransferase superfamily. rRNA adenine N(6)-methyltransferase family.

The enzyme catalyses adenosine(2085) in 23S rRNA + 2 S-adenosyl-L-methionine = N(6)-dimethyladenosine(2085) in 23S rRNA + 2 S-adenosyl-L-homocysteine + 2 H(+). In terms of biological role, this protein produces a dimethylation of the adenine residue at position 2085 in 23S rRNA, resulting in reduced affinity between ribosomes and macrolide-lincosamide-streptogramin B antibiotics. This is rRNA adenine N-6-methyltransferase from Streptococcus sanguinis.